Reading from the N-terminus, the 336-residue chain is uncharacterized protein (336 aa).

The segment at 162–195 (ARGLPVHSSFKQNNSSQTSSNKGTTTVAAGSGSD) is disordered. The segment covering 169–187 (SSFKQNNSSQTSSNKGTTT) has biased composition (low complexity).

Belongs to the AHA1 family.

This is an uncharacterized protein from Schizosaccharomyces pombe (strain 972 / ATCC 24843) (Fission yeast).